The chain runs to 263 residues: 3-oxo-5-alpha-steroid 4-dehydrogenase 1 (263 aa).

Helical transmembrane passes span 16-33 (MLAA…AVLA), 90-110 (ILLA…PFLM), 115-135 (PMPL…GYLQ), 155-175 (FLIG…SDHI), and 213-233 (YALA…FCFL).

This sequence belongs to the steroid 5-alpha reductase family.

It localises to the microsome membrane. The protein localises to the endoplasmic reticulum membrane. The enzyme catalyses a 3-oxo-5alpha-steroid + NADP(+) = a 3-oxo-Delta(4)-steroid + NADPH + H(+). It carries out the reaction 5alpha-pregnane-3,20-dione + NADP(+) = progesterone + NADPH + H(+). It catalyses the reaction 17beta-hydroxy-5alpha-androstan-3-one + NADP(+) = testosterone + NADPH + H(+). The catalysed reaction is androst-4-ene-3,17-dione + NADPH + H(+) = 5alpha-androstan-3,17-dione + NADP(+). Functionally, converts testosterone into 5-alpha-dihydrotestosterone and progesterone or corticosterone into their corresponding 5-alpha-3-oxosteroids. It plays a central role in sexual differentiation and androgen physiology. This chain is 3-oxo-5-alpha-steroid 4-dehydrogenase 1 (SRD5A1), found in Macaca fascicularis (Crab-eating macaque).